The following is a 1433-amino-acid chain: CAP-Gly domain-containing linker protein 1 (1433 aa).

Residues 1-51 (MSMLKPSGLKAPSKTIKHGSTLLKAPASVATAPAEKAPSSEKSSSTTTADA) form a disordered region. Residues 32–49 (APAEKAPSSEKSSSTTTA) show a composition bias toward low complexity. The 43-residue stretch at 79–121 (GETQFAPGQWAGIVLDEPIGKNDGSVAGVRYFQCEPLRGIFTR) folds into the CAP-Gly 1 domain. Residues 133–208 (DEANGTQTAH…VSNLSEAGSL (76 aa)) form a disordered region. The segment covering 140–168 (TAHASRATSPTSTSTASAVSASPAALLPS) has biased composition (low complexity). Residues 184–204 (TPSQFSNLSKTASGSVSNLSE) are compositionally biased toward polar residues. One can recognise a CAP-Gly 2 domain in the interval 235-277 (GETDFAKGEWCGVELDEPLGKNDGAVAGTRYFQCQPRYGLFAP). Over residues 319–333 (SLSSVASSVSSKPSR) the composition is skewed to low complexity. Positions 319–338 (SLSSVASSVSSKPSRTGLLT) are disordered. Residues 351-1353 (TTALQEALKE…CEAALNGNEE (1003 aa)) adopt a coiled-coil conformation. The segment at 1412 to 1429 (PYCDTCEMFGHWTADCND) adopts a CCHC-type zinc-finger fold.

The protein localises to the cytoplasm. It localises to the cytoskeleton. The protein resides in the cytoplasmic vesicle membrane. Its subcellular location is the cell projection. It is found in the ruffle. Binds to the plus end of microtubules and regulates the dynamics of the microtubule cytoskeleton. Promotes microtubule growth and microtubule bundling. Links cytoplasmic vesicles to microtubules and thereby plays an important role in intracellular vesicle trafficking. Plays a role macropinocytosis and endosome trafficking. This Gallus gallus (Chicken) protein is CAP-Gly domain-containing linker protein 1 (CLIP1).